We begin with the raw amino-acid sequence, 285 residues long: Pantothenate synthetase (285 aa).

32–39 contacts ATP; the sequence is MGALHDGH. Residue H39 is the Proton donor of the active site. A (R)-pantoate-binding site is contributed by Q63. Q63 provides a ligand contact to beta-alanine. 149–152 contributes to the ATP binding site; that stretch reads GEKD. Q155 lines the (R)-pantoate pocket. ATP is bound by residues V178 and 186 to 189; that span reads MSSR.

Belongs to the pantothenate synthetase family. As to quaternary structure, homodimer.

Its subcellular location is the cytoplasm. It carries out the reaction (R)-pantoate + beta-alanine + ATP = (R)-pantothenate + AMP + diphosphate + H(+). Its pathway is cofactor biosynthesis; (R)-pantothenate biosynthesis; (R)-pantothenate from (R)-pantoate and beta-alanine: step 1/1. Functionally, catalyzes the condensation of pantoate with beta-alanine in an ATP-dependent reaction via a pantoyl-adenylate intermediate. The chain is Pantothenate synthetase from Ruegeria pomeroyi (strain ATCC 700808 / DSM 15171 / DSS-3) (Silicibacter pomeroyi).